The sequence spans 250 residues: Probable cytokinin riboside 5'-monophosphate phosphoribohydrolase LOGL6 (250 aa).

Substrate is bound by residues glutamate 98, arginine 116 to lysine 117, and glycine 133 to glutamate 139.

This sequence belongs to the LOG family. In terms of tissue distribution, expressed in roots, leaves, stems, tiller buds, shoot apex, immature inflorescences and flowers.

It catalyses the reaction N(6)-(dimethylallyl)adenosine 5'-phosphate + H2O = N(6)-dimethylallyladenine + D-ribose 5-phosphate. The enzyme catalyses 9-ribosyl-trans-zeatin 5'-phosphate + H2O = trans-zeatin + D-ribose 5-phosphate. In terms of biological role, cytokinin-activating enzyme working in the direct activation pathway. Phosphoribohydrolase that converts inactive cytokinin nucleotides to the biologically active free-base forms. The chain is Probable cytokinin riboside 5'-monophosphate phosphoribohydrolase LOGL6 (LOGL6) from Oryza sativa subsp. japonica (Rice).